We begin with the raw amino-acid sequence, 285 residues long: Complex I assembly factor TIMMDC1, mitochondrial (285 aa).

4 consecutive transmembrane segments (helical) span residues 80-100, 137-159, 165-185, and 188-208; these read AALS…FIYA, RWSW…LTVY, LSHF…NLGL, and LVAG…LLMA.

The protein belongs to the Tim17/Tim22/Tim23 family. As to quaternary structure, associates with the intermediate 315 kDa subcomplex of incompletely assembled complex I. Interacts with TMEM70.

It localises to the mitochondrion membrane. In terms of biological role, chaperone protein involved in the assembly of the mitochondrial NADH:ubiquinone oxidoreductase complex (complex I). Participates in constructing the membrane arm of complex I. The chain is Complex I assembly factor TIMMDC1, mitochondrial from Rattus norvegicus (Rat).